The following is a 240-amino-acid chain: Adenosylcobinamide-GDP ribazoletransferase (240 aa).

The next 5 membrane-spanning stretches (helical) occupy residues 31–51 (LLYY…ASHL), 62–81 (ALLL…DGLA), 109–129 (IAVV…WVLV), 133–153 (IGAQ…GLFL), and 179–199 (VLLV…LLAL).

This sequence belongs to the CobS family. Mg(2+) is required as a cofactor.

It is found in the cell inner membrane. It catalyses the reaction alpha-ribazole + adenosylcob(III)inamide-GDP = adenosylcob(III)alamin + GMP + H(+). The enzyme catalyses alpha-ribazole 5'-phosphate + adenosylcob(III)inamide-GDP = adenosylcob(III)alamin 5'-phosphate + GMP + H(+). It participates in cofactor biosynthesis; adenosylcobalamin biosynthesis; adenosylcobalamin from cob(II)yrinate a,c-diamide: step 7/7. Its function is as follows. Joins adenosylcobinamide-GDP and alpha-ribazole to generate adenosylcobalamin (Ado-cobalamin). Also synthesizes adenosylcobalamin 5'-phosphate from adenosylcobinamide-GDP and alpha-ribazole 5'-phosphate. This Pseudomonas putida (strain ATCC 47054 / DSM 6125 / CFBP 8728 / NCIMB 11950 / KT2440) protein is Adenosylcobinamide-GDP ribazoletransferase.